Reading from the N-terminus, the 449-residue chain is Tubulin beta chain (449 aa).

Residues glutamine 11, glutamate 69, serine 138, glycine 142, threonine 143, glycine 144, asparagine 204, and asparagine 226 each coordinate GTP. Position 69 (glutamate 69) interacts with Mg(2+).

This sequence belongs to the tubulin family. Dimer of alpha and beta chains. A typical microtubule is a hollow water-filled tube with an outer diameter of 25 nm and an inner diameter of 15 nM. Alpha-beta heterodimers associate head-to-tail to form protofilaments running lengthwise along the microtubule wall with the beta-tubulin subunit facing the microtubule plus end conferring a structural polarity. Microtubules usually have 13 protofilaments but different protofilament numbers can be found in some organisms and specialized cells. The cofactor is Mg(2+).

Its subcellular location is the cytoplasm. It is found in the cytoskeleton. In terms of biological role, tubulin is the major constituent of microtubules, a cylinder consisting of laterally associated linear protofilaments composed of alpha- and beta-tubulin heterodimers. Microtubules grow by the addition of GTP-tubulin dimers to the microtubule end, where a stabilizing cap forms. Below the cap, tubulin dimers are in GDP-bound state, owing to GTPase activity of alpha-tubulin. This is Tubulin beta chain (TUB2) from Candida albicans (Yeast).